The sequence spans 202 residues: N-(5'-phosphoribosyl)anthranilate isomerase (202 aa).

The protein belongs to the TrpF family.

The catalysed reaction is N-(5-phospho-beta-D-ribosyl)anthranilate = 1-(2-carboxyphenylamino)-1-deoxy-D-ribulose 5-phosphate. It participates in amino-acid biosynthesis; L-tryptophan biosynthesis; L-tryptophan from chorismate: step 3/5. This is N-(5'-phosphoribosyl)anthranilate isomerase from Geobacter metallireducens (strain ATCC 53774 / DSM 7210 / GS-15).